The chain runs to 246 residues: Nuclear transcription factor Y subunit C-2 (246 aa).

Disordered stretches follow at residues 1 to 35 (MDNQ…AVPH) and 205 to 246 (QQGA…PSSE). Residues 9–21 (AGQPAAAGAGAPV) show a composition bias toward low complexity.

Belongs to the NFYC/HAP5 subunit family. Heterotrimeric transcription factor composed of three components, NF-YA, NF-YB and NF-YC. NF-YB and NF-YC must interact and dimerize for NF-YA association and DNA binding. Interacts with NFYB8, NFYB10 and HD5/NFYB11.

The protein resides in the nucleus. It is found in the cytoplasm. Probable transcription factor involved in the regulation of flowering time under long day (LD) conditions. Functions as a repressor of flowering, independently of HD1 and GHD7. Controls flowering time by negatively regulating the expression of EHD1 and HD3A. Component of the NF-Y/HAP transcription factor complex. This is Nuclear transcription factor Y subunit C-2 from Oryza sativa subsp. japonica (Rice).